The primary structure comprises 224 residues: Probable C-&gt;U-editing enzyme APOBEC-2 (224 aa).

A disordered region spans residues 1–25 (MAQKEEAAAAAEPASQNGEEVENLE). Zn(2+)-binding residues include glutamate 60 and histidine 98. A CMP/dCMP-type deaminase domain is found at 64 to 169 (GRNKTFLCYV…PEIQAALRKL (106 aa)). The active-site Proton donor is the glutamate 100. 2 residues coordinate Zn(2+): cysteine 128 and cysteine 131.

Belongs to the cytidine and deoxycytidylate deaminase family. Homotetramer. Zn(2+) is required as a cofactor.

The enzyme catalyses cytidine(6666) in apoB mRNA + H2O + H(+) = uridine(6666) in apoB mRNA + NH4(+). Probable C to U editing enzyme whose physiological substrate is not yet known. Does not display detectable apoB mRNA editing. Has a low intrinsic cytidine deaminase activity. May play a role in the epigenetic regulation of gene expression through the process of active DNA demethylation. In Bos taurus (Bovine), this protein is Probable C-&gt;U-editing enzyme APOBEC-2 (APOBEC2).